A 390-amino-acid chain; its full sequence is Chorismate synthase (390 aa).

The NADP(+) site is built by arginine 48 and arginine 54. Residues 125–127 (RSS), 238–239 (NA), glycine 278, 293–297 (KPTSS), and arginine 319 contribute to the FMN site. The tract at residues 360–390 (KVPGNIINPTNPVTTQPDVRRAEDPEPDENS) is disordered. The span at 366 to 376 (INPTNPVTTQP) shows a compositional bias: polar residues.

Belongs to the chorismate synthase family. In terms of assembly, homotetramer. It depends on FMNH2 as a cofactor.

The catalysed reaction is 5-O-(1-carboxyvinyl)-3-phosphoshikimate = chorismate + phosphate. It functions in the pathway metabolic intermediate biosynthesis; chorismate biosynthesis; chorismate from D-erythrose 4-phosphate and phosphoenolpyruvate: step 7/7. Catalyzes the anti-1,4-elimination of the C-3 phosphate and the C-6 proR hydrogen from 5-enolpyruvylshikimate-3-phosphate (EPSP) to yield chorismate, which is the branch point compound that serves as the starting substrate for the three terminal pathways of aromatic amino acid biosynthesis. This reaction introduces a second double bond into the aromatic ring system. This chain is Chorismate synthase, found in Nitrosomonas eutropha (strain DSM 101675 / C91 / Nm57).